The following is a 461-amino-acid chain: ATP synthase subunit beta 2 (461 aa).

G151–T158 is an ATP binding site.

The protein belongs to the ATPase alpha/beta chains family. In terms of assembly, F-type ATPases have 2 components, CF(1) - the catalytic core - and CF(0) - the membrane proton channel. CF(1) has five subunits: alpha(3), beta(3), gamma(1), delta(1), epsilon(1). CF(0) has three main subunits: a(1), b(2) and c(9-12). The alpha and beta chains form an alternating ring which encloses part of the gamma chain. CF(1) is attached to CF(0) by a central stalk formed by the gamma and epsilon chains, while a peripheral stalk is formed by the delta and b chains.

The protein resides in the cell inner membrane. It carries out the reaction ATP + H2O + 4 H(+)(in) = ADP + phosphate + 5 H(+)(out). Produces ATP from ADP in the presence of a proton gradient across the membrane. The catalytic sites are hosted primarily by the beta subunits. This Pseudoalteromonas atlantica (strain T6c / ATCC BAA-1087) protein is ATP synthase subunit beta 2.